The sequence spans 772 residues: Semaphorin-3A (772 aa).

The N-terminal stretch at 1–22 is a signal peptide; it reads MGWLRGIALLSLGVLLAGRVNC. A Sema domain is found at 31–514; the sequence is RLKLSYKEML…SATGVSQLPL (484 aa). Asparagine 53 carries N-linked (GlcNAc...) asparagine glycosylation. An intrachain disulfide couples cysteine 103 to cysteine 114. Asparagine 125 carries an N-linked (GlcNAc...) asparagine glycan. 4 cysteine pairs are disulfide-bonded: cysteine 132–cysteine 141, cysteine 269–cysteine 381, cysteine 293–cysteine 341, and cysteine 517–cysteine 535. Residues 576–665 form the Ig-like C2-type domain; that stretch reads PSGQTLEEKI…GFIQTLLKVT (90 aa). An N-linked (GlcNAc...) asparagine glycan is attached at asparagine 591. Cysteine 650 and cysteine 723 form a disulfide bridge. Positions 730-772 are disordered; sequence DRKQRRQRPANAQVNTNKWKHLQENKKGRNRRTHEFERAPRSV. The span at 750 to 772 shows a compositional bias: basic and acidic residues; that stretch reads HLQENKKGRNRRTHEFERAPRSV.

The protein belongs to the semaphorin family. Expressed at relatively high levels in brain and muscle, moderate levels in lung, bursa, and heart and virtually absent in liver. Collapsin-1, -2, -3, and -5 bind to overlapping but distinct axon tracts.

It is found in the secreted. Its function is as follows. Induces the collapse and paralysis of neuronal growth cones. Could serve as a ligand that guides specific growth cones by a motility-inhibiting mechanism. Binds to neuropilin. This is Semaphorin-3A (SEMA3A) from Gallus gallus (Chicken).